A 364-amino-acid chain; its full sequence is DNA polymerase processivity factor (364 aa).

Disordered regions lie at residues 1-24, 284-306, and 325-364; these read MDRS…KEPP, DDPK…KVEE, and VPTK…RCGM.

It belongs to the herpesviridae polymerase accessory protein family.

In terms of biological role, accessory subunit of the DNA polymerase that acts to increase the processivity of polymerization. The protein is DNA polymerase processivity factor (U27) of Homo sapiens (Human).